We begin with the raw amino-acid sequence, 76 residues long: UPF0352 protein ECA2748 (76 aa).

The protein belongs to the UPF0352 family.

The polypeptide is UPF0352 protein ECA2748 (Pectobacterium atrosepticum (strain SCRI 1043 / ATCC BAA-672) (Erwinia carotovora subsp. atroseptica)).